Reading from the N-terminus, the 266-residue chain is Undecaprenyl-diphosphatase (266 aa).

A run of 8 helical transmembrane segments spans residues 1 to 21 (MTWLEIVVLALIQGLTEFLPI), 39 to 59 (QGLAFDVAVHVGTLLAVMVYF), 87 to 107 (WAVILGTIPACVAGLLLDSWI), 111 to 131 (LRSALVIALTTIGFGVLLGMA), 143 to 163 (FTLKDALIIGVSQALALIPGT), 186 to 206 (FSFLLSIPLIAAAGLFKGLEL), 217 to 237 (EIAGATLISAVSAYACIHLFL), and 243 to 263 (IGFMPFVIYRMLLGAGLLVWL).

Belongs to the UppP family.

The protein localises to the cell inner membrane. The enzyme catalyses di-trans,octa-cis-undecaprenyl diphosphate + H2O = di-trans,octa-cis-undecaprenyl phosphate + phosphate + H(+). Its function is as follows. Catalyzes the dephosphorylation of undecaprenyl diphosphate (UPP). Confers resistance to bacitracin. The chain is Undecaprenyl-diphosphatase from Hahella chejuensis (strain KCTC 2396).